The following is a 106-amino-acid chain: Ribulose bisphosphate carboxylase small subunit (106 aa).

The protein belongs to the RuBisCO small chain family. In terms of assembly, heterohexadecamer of 8 large and 8 small subunits.

It localises to the plastid. The protein resides in the cyanelle. Functionally, ruBisCO catalyzes two reactions: the carboxylation of D-ribulose 1,5-bisphosphate, the primary event in carbon dioxide fixation, as well as the oxidative fragmentation of the pentose substrate. Both reactions occur simultaneously and in competition at the same active site. Although the small subunit is not catalytic it is essential for maximal activity. In Cyanophora paradoxa, this protein is Ribulose bisphosphate carboxylase small subunit.